A 561-amino-acid polypeptide reads, in one-letter code: Alpha-1D adrenergic receptor (561 aa).

Residues 1 to 90 (MTFRDILSVT…VGGLVVSAQG (90 aa)) are Extracellular-facing. The interval 10 to 71 (TFEGPRSSSS…SSTGEPGAAA (62 aa)) is disordered. The segment covering 21–56 (GGSGAGGGAGTVGPEGGAVGGVPGATGGGAVVGTGS) has biased composition (gly residues). 2 N-linked (GlcNAc...) asparagine glycosylation sites follow: Asn60 and Asn76. A helical membrane pass occupies residues 91-115 (VGVGVFLAAFILTAVAGNLLVILSV). At 116 to 127 (ACNRHLQTVTNY) the chain is on the cytoplasmic side. The chain crosses the membrane as a helical span at residues 128–153 (FIVNLAVADLLLSAAVLPFSATMEVL). Topologically, residues 154-163 (GFWAFGRTFC) are extracellular. A helical membrane pass occupies residues 164–186 (DVWAAVDVLCCTASILSLCTISV). The Cytoplasmic segment spans residues 187-207 (DRYVGVRHSLKYPAIMTERKA). Residues 208 to 232 (AAILALLWAVALVVSVGPLLGWKEP) form a helical membrane-spanning segment. Over 233–245 (VPPDERFCGITEE) the chain is Extracellular. Residues 246-269 (VGYAIFSSVCSFYLPMAVIVVMYC) form a helical membrane-spanning segment. The Cytoplasmic segment spans residues 270 to 342 (RVYVVARSTT…KFSREKKAAK (73 aa)). A helical membrane pass occupies residues 343–367 (TLAIVVGVFVLCWFPFFFVLPLGSL). Over 368–374 (FPQLKPS) the chain is Extracellular. The helical transmembrane segment at 375–399 (EGVFKVIFWLGYFNSCVNPLIYPCS) threads the bilayer. Over 400–561 (SREFKRAFLR…DYSNLRETDI (162 aa)) the chain is Cytoplasmic. Residue Cys413 is the site of S-palmitoyl cysteine attachment. Residues 452–481 (APLALTAHPGAGSADTPETQDSVSSSRKPA) form a disordered region. Positions 467 to 479 (TPETQDSVSSSRK) are enriched in polar residues.

This sequence belongs to the G-protein coupled receptor 1 family. Adrenergic receptor subfamily. ADRA1D sub-subfamily. In terms of assembly, interacts with FLNA (via filamin repeat 21); increases PKA-mediated phosphorylation of FLNA. Post-translationally, palmitoylated. Palmitoylation by ZDHHC21 may increase the expression of the receptor and regulate downstream signaling. In terms of tissue distribution, vas deferens, hippocampus, cerebral cortex, aorta, brain stem, heart and spleen.

It is found in the cell membrane. Its function is as follows. This alpha-adrenergic receptor mediates its effect through the influx of extracellular calcium. The sequence is that of Alpha-1D adrenergic receptor (Adra1d) from Rattus norvegicus (Rat).